The following is a 141-amino-acid chain: Putative pre-16S rRNA nuclease (141 aa).

It belongs to the YqgF nuclease family.

The protein localises to the cytoplasm. In terms of biological role, could be a nuclease involved in processing of the 5'-end of pre-16S rRNA. This Cupriavidus necator (strain ATCC 17699 / DSM 428 / KCTC 22496 / NCIMB 10442 / H16 / Stanier 337) (Ralstonia eutropha) protein is Putative pre-16S rRNA nuclease.